Here is a 953-residue protein sequence, read N- to C-terminus: MDNLLPQSRFSYFKKYPIHAIRKYLSMLRNQKEEEQVARFQKIPNAENETMIPVLTSKKASELPVSEVASILQADLQNGLNKCEVSHRRAFHGWNEFDISEDEPLWKKYISQFKNPLIMLLLASAVISVLMHQFDDAVSITVAILIVVTVAFVQEYRSEKSLEELSKLMPPECHCVREGKLEHTLARDLVPGDTVCLSVGDRVPADLRLFEAVDLSVDESSLTGETTPCSKVTAPQPAATNGDLASRSNIAFMGTLVRCGKAKGIVIGTGENSEFGEVFKMMQAEEAPKTPLQKSMDLLGKQLSFYSFGIIGIIMLVGWLLGKDILEMFTISVSLAVAAIPEGLPIVVTVTLALGVMRMVKKRAIVKKLPIVETLGCCNVICSDKTGTLTKNEMTVTHIFTSDGLRAEVTGVGYNPFGEVIVDGDVVHGFYNPSVSRIVEAGCVCNDAVIRNNTLMGKPTEGALIALAMKMGLDGLQQDYIRKAEYPFSSEQKWMAVKCVHRTQQDRPEICFMKGAYEQVIKYCTTYHSKGQTLTLTQQQRDLYQQEKAQMGSAGLRVLALASGPELGQLTFLGLVGIIDPPRTGVKEAVTTLIASGVSIKMITGDSQETAVAIASRLGLYSKTSQSVSGEEIDAMDVQQLSQIVPKVAVFYRASPRHKMKIIKSLQKNGSVVAMTGDGVNDAVALKAADIGVAMGQTGTDVCKEAADMILVDDDFQTIMSAIEEGKGIYNNIKNFVRFQLSTSIAALTLISLATLMNFPNPLNAMQILWINIIMDGPPAQSLGVEPVDKDVIRKPPRNWKDSILTKNLILKILVSSIIIVCGTLFVFWRELRDNVITPRDTTMTFTCFVFFDMFNALSSRSQTKSVFEIGLCSNKMFCYAVLGSIMGQLLVIYFPPLQKVFQTESLSILDLLFLLGLTSSVCIVAEIIKKVERSREKIQKPVSSTSSSFLEV.

At 1–104 the chain is on the cytoplasmic side; sequence MDNLLPQSRF…NEFDISEDEP (104 aa). A helical transmembrane segment spans residues 105–125; that stretch reads LWKKYISQFKNPLIMLLLASA. Over 126–138 the chain is Lumenal; it reads VISVLMHQFDDAV. A helical transmembrane segment spans residues 139 to 157; the sequence is SITVAILIVVTVAFVQEYR. At 158 to 296 the chain is on the cytoplasmic side; the sequence is SEKSLEELSK…APKTPLQKSM (139 aa). A helical transmembrane segment spans residues 297–316; the sequence is DLLGKQLSFYSFGIIGIIML. Topologically, residues 317–328 are lumenal; that stretch reads VGWLLGKDILEM. Residues 329–346 form a helical membrane-spanning segment; that stretch reads FTISVSLAVAAIPEGLPI. 4 residues coordinate Ca(2+): V337, A338, I340, and E342. Residues 347 to 733 lie on the Cytoplasmic side of the membrane; that stretch reads VVTVTLALGV…EEGKGIYNNI (387 aa). The 4-aspartylphosphate intermediate role is filled by D384. Mg(2+) is bound by residues D678 and D682. The chain crosses the membrane as a helical span at residues 734-753; the sequence is KNFVRFQLSTSIAALTLISL. The Lumenal portion of the chain corresponds to 754–763; sequence ATLMNFPNPL. Residues 764-784 form a helical membrane-spanning segment; that stretch reads NAMQILWINIIMDGPPAQSLG. Ca(2+) is bound by residues N772 and D776. The Cytoplasmic portion of the chain corresponds to 785–804; it reads VEPVDKDVIRKPPRNWKDSI. The chain crosses the membrane as a helical span at residues 805-824; the sequence is LTKNLILKILVSSIIIVCGT. The Lumenal segment spans residues 825–842; it reads LFVFWRELRDNVITPRDT. The helical transmembrane segment at 843 to 862 threads the bilayer; that stretch reads TMTFTCFVFFDMFNALSSRS. Residues 863 to 875 are Cytoplasmic-facing; the sequence is QTKSVFEIGLCSN. Residues 876 to 894 traverse the membrane as a helical segment; it reads KMFCYAVLGSIMGQLLVIY. At 895-909 the chain is on the lumenal side; it reads FPPLQKVFQTESLSI. A helical transmembrane segment spans residues 910–930; the sequence is LDLLFLLGLTSSVCIVAEIIK. Over 931–953 the chain is Cytoplasmic; sequence KVERSREKIQKPVSSTSSSFLEV.

Belongs to the cation transport ATPase (P-type) (TC 3.A.3) family. Type IIA subfamily. In terms of assembly, monomer. Homodimer.

Its subcellular location is the golgi apparatus. It is found in the trans-Golgi network membrane. The protein localises to the golgi stack membrane. It catalyses the reaction Ca(2+)(in) + ATP + H2O = Ca(2+)(out) + ADP + phosphate + H(+). The catalysed reaction is Mn(2+)(in) + ATP + H2O = Mn(2+)(out) + ADP + phosphate + H(+). Functionally, ATP-driven pump that supplies the Golgi apparatus with Ca(2+) and Mn(2+) ions, both essential cofactors for processing and trafficking of newly synthesized proteins in the secretory pathway. Within a catalytic cycle, acquires Ca(2+) or Mn(2+) ions on the cytoplasmic side of the membrane and delivers them to the lumenal side. The transfer of ions across the membrane is coupled to ATP hydrolysis and is associated with a transient phosphorylation that shifts the pump conformation from inward-facing to outward-facing state. Plays a primary role in the maintenance of Ca(2+) homeostasis in the trans-Golgi compartment with a functional impact on Golgi and post-Golgi protein sorting as well as a structural impact on cisternae morphology. Responsible for loading the Golgi stores with Ca(2+) ions in keratinocytes, contributing to keratinocyte differentiation and epidermis integrity. Participates in Ca(2+) and Mn(2+) ions uptake into the Golgi store of hippocampal neurons and regulates protein trafficking required for neural polarity. May also play a role in the maintenance of Ca(2+) and Mn(2+) homeostasis and signaling in the cytosol while preventing cytotoxicity. The protein is Calcium-transporting ATPase type 2C member 1 (ATP2C1) of Bos taurus (Bovine).